A 453-amino-acid chain; its full sequence is Flap endonuclease 1 (453 aa).

The interval 1 to 105 (MGIKGLTGLL…SVLAKRFARR (105 aa)) is N-domain. Asp34 contacts Mg(2+). Residues Arg47 and Arg71 each coordinate DNA. Mg(2+) contacts are provided by Asp87, Glu159, Glu161, Asp180, and Asp182. The segment at 123 to 254 (DVDKLARRQV…KTALKLMREH (132 aa)) is I-domain. Glu159 provides a ligand contact to DNA. DNA is bound by residues Gly232 and Asp234. Residue Asp234 coordinates Mg(2+). 2 disordered regions span residues 273-336 (EEIK…VASS) and 409-453 (RLDG…KSKN). Over residues 320–333 (KSPKKKAPAKKKKV) the composition is skewed to basic residues. The tract at residues 406–414 (QQGRLDGFF) is interaction with PCNA. The segment covering 417–446 (KPKEPAAKDTGKGKGKATKGEKRKAEEKGS) has biased composition (basic and acidic residues).

This sequence belongs to the XPG/RAD2 endonuclease family. FEN1 subfamily. As to quaternary structure, interacts with PCNA. Three molecules of FEN1 bind to one PCNA trimer with each molecule binding to one PCNA monomer. PCNA stimulates the nuclease activity without altering cleavage specificity. It depends on Mg(2+) as a cofactor. Phosphorylated. Phosphorylation upon DNA damage induces relocalization to the nuclear plasma.

The protein resides in the nucleus. The protein localises to the nucleolus. It localises to the nucleoplasm. It is found in the mitochondrion. Structure-specific nuclease with 5'-flap endonuclease and 5'-3' exonuclease activities involved in DNA replication and repair. During DNA replication, cleaves the 5'-overhanging flap structure that is generated by displacement synthesis when DNA polymerase encounters the 5'-end of a downstream Okazaki fragment. It enters the flap from the 5'-end and then tracks to cleave the flap base, leaving a nick for ligation. Also involved in the long patch base excision repair (LP-BER) pathway, by cleaving within the apurinic/apyrimidinic (AP) site-terminated flap. Acts as a genome stabilization factor that prevents flaps from equilibrating into structures that lead to duplications and deletions. Also possesses 5'-3' exonuclease activity on nicked or gapped double-stranded DNA, and exhibits RNase H activity. Also involved in replication and repair of rDNA and in repairing mitochondrial DNA. The protein is Flap endonuclease 1 of Cryptococcus neoformans var. neoformans serotype D (strain B-3501A) (Filobasidiella neoformans).